A 443-amino-acid chain; its full sequence is Probable cytosolic iron-sulfur protein assembly protein 1 (443 aa).

Disordered regions lie at residues Met1–Ala27 and Arg95–Glu124. The span at Thr8–Ser21 shows a compositional bias: low complexity. 2 WD repeats span residues Thr14–Ser57 and Gly61–Asp103. Residues Ala113 to Glu124 show a composition bias toward acidic residues. WD repeat units follow at residues Gly135 to Thr174, Glu180 to Val219, Cys221 to Arg248, Ser255 to Asn294, Val323 to Asn362, and Ala391 to Gln440.

The protein belongs to the WD repeat CIA1 family.

Its function is as follows. Essential component of the cytosolic iron-sulfur (Fe/S) protein assembly machinery. Required for the maturation of extramitochondrial Fe/S proteins. The sequence is that of Probable cytosolic iron-sulfur protein assembly protein 1 from Phaeosphaeria nodorum (strain SN15 / ATCC MYA-4574 / FGSC 10173) (Glume blotch fungus).